Reading from the N-terminus, the 901-residue chain is Translation initiation factor IF-2 (901 aa).

The segment at histidine 48–proline 313 is disordered. Positions serine 68–valine 82 are enriched in polar residues. The segment covering alanine 106–tryptophan 226 has biased composition (basic and acidic residues). Residues alanine 263–serine 277 are compositionally biased toward basic residues. Positions lysine 278–alanine 291 are enriched in basic and acidic residues. One can recognise a tr-type G domain in the interval proline 400 to lysine 569. The interval glycine 409 to threonine 416 is G1. A GTP-binding site is contributed by glycine 409 to threonine 416. The tract at residues glycine 434–histidine 438 is G2. The segment at aspartate 455–glycine 458 is G3. GTP is bound by residues aspartate 455–histidine 459 and asparagine 509–aspartate 512. The segment at asparagine 509–aspartate 512 is G4. The interval serine 545–lysine 547 is G5.

It belongs to the TRAFAC class translation factor GTPase superfamily. Classic translation factor GTPase family. IF-2 subfamily.

The protein localises to the cytoplasm. One of the essential components for the initiation of protein synthesis. Protects formylmethionyl-tRNA from spontaneous hydrolysis and promotes its binding to the 30S ribosomal subunits. Also involved in the hydrolysis of GTP during the formation of the 70S ribosomal complex. This Edwardsiella ictaluri (strain 93-146) protein is Translation initiation factor IF-2.